The following is a 536-amino-acid chain: Ribulokinase (536 aa).

The protein belongs to the ribulokinase family.

It catalyses the reaction D-ribulose + ATP = D-ribulose 5-phosphate + ADP + H(+). The enzyme catalyses L-ribulose + ATP = L-ribulose 5-phosphate + ADP + H(+). It participates in carbohydrate degradation; L-arabinose degradation via L-ribulose; D-xylulose 5-phosphate from L-arabinose (bacterial route): step 2/3. This Staphylococcus epidermidis (strain ATCC 35984 / DSM 28319 / BCRC 17069 / CCUG 31568 / BM 3577 / RP62A) protein is Ribulokinase.